Here is a 248-residue protein sequence, read N- to C-terminus: Delayed minus-nitrogen induction protein 2 (248 aa).

A run of 4 helical transmembrane segments spans residues 26-46 (IFSN…CCSC), 110-130 (VHPV…VLTI), 144-164 (ISCL…MALA), and 186-206 (GVAA…FSLI).

The protein belongs to the SUR7 family.

The protein localises to the membrane. This chain is Delayed minus-nitrogen induction protein 2 (dni2), found in Schizosaccharomyces pombe (strain 972 / ATCC 24843) (Fission yeast).